Reading from the N-terminus, the 511-residue chain is Cytochrome P450 26B1 (511 aa).

C440 contributes to the heme binding site.

Belongs to the cytochrome P450 family. The cofactor is heme.

It localises to the endoplasmic reticulum membrane. Its subcellular location is the microsome membrane. The catalysed reaction is all-trans-retinoate + reduced [NADPH--hemoprotein reductase] + O2 = all-trans-4-hydroxyretinoate + oxidized [NADPH--hemoprotein reductase] + H2O + H(+). It catalyses the reaction all-trans-retinoate + reduced [NADPH--hemoprotein reductase] + O2 = all-trans-18-hydroxyretinoate + oxidized [NADPH--hemoprotein reductase] + H2O + H(+). Its function is as follows. A cytochrome P450 monooxygenase involved in the metabolism of retinoates (RAs), the active metabolites of vitamin A, and critical signaling molecules in animals. RAs exist as at least four different isomers: all-trans-RA (atRA), 9-cis-RA, 13-cis-RA, and 9,13-dicis-RA, where atRA is considered to be the biologically active isomer, although 9-cis-RA and 13-cis-RA also have activity. Catalyzes the hydroxylation of atRA primarily at C-4 and C-18, thereby contributing to the regulation of atRA homeostasis and signaling. Hydroxylation of atRA limits its biological activity and initiates a degradative process leading to its eventual elimination. Involved in the convertion of atRA to all-trans-4-oxo-RA. Can oxidize all-trans-13,14-dihydroretinoate (DRA) to metabolites which could include all-trans-4-oxo-DRA, all-trans-4-hydroxy-DRA, all-trans-5,8-epoxy-DRA, and all-trans-18-hydroxy-DRA. This is Cytochrome P450 26B1 (cyp26b1) from Xenopus tropicalis (Western clawed frog).